The sequence spans 38 residues: Large ribosomal subunit protein bL36 (38 aa).

Belongs to the bacterial ribosomal protein bL36 family.

The chain is Large ribosomal subunit protein bL36 from Hamiltonella defensa subsp. Acyrthosiphon pisum (strain 5AT).